Reading from the N-terminus, the 257-residue chain is Tryptophan synthase alpha chain (257 aa).

Active-site proton acceptor residues include Glu44 and Asp55.

It belongs to the TrpA family. In terms of assembly, tetramer of two alpha and two beta chains.

It catalyses the reaction (1S,2R)-1-C-(indol-3-yl)glycerol 3-phosphate + L-serine = D-glyceraldehyde 3-phosphate + L-tryptophan + H2O. It participates in amino-acid biosynthesis; L-tryptophan biosynthesis; L-tryptophan from chorismate: step 5/5. Its function is as follows. The alpha subunit is responsible for the aldol cleavage of indoleglycerol phosphate to indole and glyceraldehyde 3-phosphate. This Chlamydia caviae (strain ATCC VR-813 / DSM 19441 / 03DC25 / GPIC) (Chlamydophila caviae) protein is Tryptophan synthase alpha chain.